We begin with the raw amino-acid sequence, 732 residues long: Polyribonucleotide nucleotidyltransferase (732 aa).

Mg(2+) contacts are provided by Asp515 and Asp521. The KH domain occupies 581–641; that stretch reads PKLELFNVDP…KNVDAAKDYI (61 aa). Residues 672 to 731 form the S1 motif domain; it reads GDEFTGSVKSVVDFGVFIELKDGVDGLLHISKIKSPLNVGDQVKVCVSEQKGNKISLSLV.

Belongs to the polyribonucleotide nucleotidyltransferase family. Requires Mg(2+) as cofactor.

The protein resides in the cytoplasm. It carries out the reaction RNA(n+1) + phosphate = RNA(n) + a ribonucleoside 5'-diphosphate. In terms of biological role, involved in mRNA degradation. Catalyzes the phosphorolysis of single-stranded polyribonucleotides processively in the 3'- to 5'-direction. This is Polyribonucleotide nucleotidyltransferase from Campylobacter concisus (strain 13826).